The following is a 96-amino-acid chain: MSAVTINDDGLVLRLYIQPKASRDSIVGLHGDEVKVAITAPPVDGQANSHLVKFLGKQFRVAKSQVVIEKGELGRHKQIKIINPQQIPPEIAALLN.

This sequence belongs to the UPF0235 family.

The chain is UPF0235 protein YggU from Escherichia coli O127:H6 (strain E2348/69 / EPEC).